The sequence spans 93 residues: Small ribosomal subunit protein uS19 (93 aa).

It belongs to the universal ribosomal protein uS19 family.

In terms of biological role, protein S19 forms a complex with S13 that binds strongly to the 16S ribosomal RNA. The sequence is that of Small ribosomal subunit protein uS19 from Arthrobacter sp. (strain FB24).